We begin with the raw amino-acid sequence, 220 residues long: Ribose-5-phosphate isomerase A (220 aa).

Residues 28 to 31 (TGST), 81 to 84 (DGAD), and 94 to 97 (KGGG) contribute to the substrate site. Residue E103 is the Proton acceptor of the active site. K121 is a substrate binding site.

It belongs to the ribose 5-phosphate isomerase family. Homodimer.

The catalysed reaction is aldehydo-D-ribose 5-phosphate = D-ribulose 5-phosphate. Its pathway is carbohydrate degradation; pentose phosphate pathway; D-ribose 5-phosphate from D-ribulose 5-phosphate (non-oxidative stage): step 1/1. Catalyzes the reversible conversion of ribose-5-phosphate to ribulose 5-phosphate. The chain is Ribose-5-phosphate isomerase A from Aromatoleum aromaticum (strain DSM 19018 / LMG 30748 / EbN1) (Azoarcus sp. (strain EbN1)).